The primary structure comprises 87 residues: Cell division topological specificity factor (87 aa).

It belongs to the MinE family.

In terms of biological role, prevents the cell division inhibition by proteins MinC and MinD at internal division sites while permitting inhibition at polar sites. This ensures cell division at the proper site by restricting the formation of a division septum at the midpoint of the long axis of the cell. The chain is Cell division topological specificity factor from Neisseria meningitidis serogroup C (strain 053442).